The sequence spans 207 residues: MVIVVDHPLVQHKLTKLRDKSTEPKEFRELLSEISSLMLYEVTRNLPTKEVEVETPLGIAKGKVLNNKDLAIVPILRAGLVMAEGMLRILPSAKVGHIGLYRDPNTLKPVQYYTKLPEDIDKREVVVVDPMLATGGSAIAAISILKTKGVKNIKFVCIISAPEGIEALKNSHPDVDIYTAAIDEKLNDHGYIIPGLGDAGDRLFGTK.

5-phospho-alpha-D-ribose 1-diphosphate contacts are provided by residues arginine 77, arginine 102, and 129-137 (DPMLATGGS). Uracil contacts are provided by residues isoleucine 192 and 197-199 (GDA). Aspartate 198 is a 5-phospho-alpha-D-ribose 1-diphosphate binding site.

Belongs to the UPRTase family. It depends on Mg(2+) as a cofactor.

It catalyses the reaction UMP + diphosphate = 5-phospho-alpha-D-ribose 1-diphosphate + uracil. Its pathway is pyrimidine metabolism; UMP biosynthesis via salvage pathway; UMP from uracil: step 1/1. Allosterically activated by GTP. Its function is as follows. Catalyzes the conversion of uracil and 5-phospho-alpha-D-ribose 1-diphosphate (PRPP) to UMP and diphosphate. This is Uracil phosphoribosyltransferase from Dictyoglomus turgidum (strain DSM 6724 / Z-1310).